The primary structure comprises 199 residues: Inner membrane-spanning protein YciB (199 aa).

Helical transmembrane passes span 7–27, 32–52, 56–76, 93–113, 126–146, and 153–173; these read HPLFKLATELGPLLVFFAANA, FVATAAFMVAIVAAMIASYVV, IPLMALVTGIVVIVFGTLTLV, LFAGVLGGGLLFGRSFIAIMF, VLTLRWALFFFGMAILNELIW, and FWVNFKVFGAVPLTMIFAMMQ.

It belongs to the YciB family.

It localises to the cell inner membrane. Its function is as follows. Plays a role in cell envelope biogenesis, maintenance of cell envelope integrity and membrane homeostasis. The chain is Inner membrane-spanning protein YciB from Nitrobacter hamburgensis (strain DSM 10229 / NCIMB 13809 / X14).